A 66-amino-acid polypeptide reads, in one-letter code: Beta-toxin ChFII.7 (66 aa).

Positions 1–66 (KEGYLVNHST…VWPLPKKTCN (66 aa)) constitute an LCN-type CS-alpha/beta domain. 4 disulfides stabilise this stretch: C12–C65, C16–C41, C25–C46, and C29–C48. N66 is modified (asparagine amide).

Expressed by the venom gland.

The protein localises to the secreted. In terms of biological role, beta toxins bind voltage independently at site-4 of sodium channels (Nav) and shift the activation voltage toward more negative potentials, thereby affecting sodium channel activation CC and promoting spontaneous and repetitive firing. The sequence is that of Beta-toxin ChFII.7 from Centruroides hirsutipalpus (Scorpion).